A 314-amino-acid chain; its full sequence is Phosphoribosylaminoimidazole-succinocarboxamide synthase (314 aa).

The protein belongs to the SAICAR synthetase family.

It catalyses the reaction 5-amino-1-(5-phospho-D-ribosyl)imidazole-4-carboxylate + L-aspartate + ATP = (2S)-2-[5-amino-1-(5-phospho-beta-D-ribosyl)imidazole-4-carboxamido]succinate + ADP + phosphate + 2 H(+). The protein operates within purine metabolism; IMP biosynthesis via de novo pathway; 5-amino-1-(5-phospho-D-ribosyl)imidazole-4-carboxamide from 5-amino-1-(5-phospho-D-ribosyl)imidazole-4-carboxylate: step 1/2. The chain is Phosphoribosylaminoimidazole-succinocarboxamide synthase from Bacteroides thetaiotaomicron (strain ATCC 29148 / DSM 2079 / JCM 5827 / CCUG 10774 / NCTC 10582 / VPI-5482 / E50).